The primary structure comprises 417 residues: Gap junction alpha-3 protein (417 aa).

The stretch at 2-15 is an intramembrane region; that stretch reads GDWSFLGRLLENAQ. Topologically, residues 16-19 are cytoplasmic; that stretch reads EHST. A helical membrane pass occupies residues 20–40; it reads VIGKVWLTVLFIFRILVLGAA. Over 41–71 the chain is Extracellular; it reads AEEVWGDEQSDFTCNTQQPGCENVCYDRAFP. Disulfide bonds link C54/C198, C61/C192, and C65/C187. Residues 72-92 traverse the membrane as a helical segment; sequence ISHIRFWALQIIFVSTPTLIY. At 93-158 the chain is on the cytoplasmic side; the sequence is LGHVLHIVRM…GALLRTYVFN (66 aa). Positions 110–128 are enriched in basic and acidic residues; sequence EEELLRRDNPQHGRGREPM. Positions 110–141 are disordered; that stretch reads EEELLRRDNPQHGRGREPMRTGSPRDPPLRDD. A helical transmembrane segment spans residues 159–179; sequence IIFKTLFEVGFIAGQYFLYGF. At 180–207 the chain is on the extracellular side; that stretch reads QLQPLYRCDRWPCPNTVDCFISRPTEKT. Residues 208-228 form a helical membrane-spanning segment; sequence IFVIFMLAVACASLVLNMLEI. Residues 229–417 are Cytoplasmic-facing; that stretch reads YHLGWKKLKQ…GRARPGDLAI (189 aa). Disordered stretches follow at residues 247–267 and 334–417; these read DASE…SSGP and RQVA…DLAI. Over residues 342 to 353 the composition is skewed to low complexity; sequence PASKPSSAASSP.

Belongs to the connexin family. Alpha-type (group II) subfamily. As to quaternary structure, a hemichannel or connexon is composed of a hexamer of connexins. A functional gap junction is formed by the apposition of two hemichannels. Forms heteromeric channels with GJA8.

The protein resides in the cell membrane. The protein localises to the cell junction. It is found in the gap junction. Structural component of lens fiber gap junctions. Gap junctions are dodecameric channels that connect the cytoplasm of adjoining cells. They are formed by the docking of two hexameric hemichannels, one from each cell membrane. Small molecules and ions diffuse from one cell to a neighboring cell via the central pore. This is Gap junction alpha-3 protein (Gja3) from Mus musculus (Mouse).